The sequence spans 224 residues: UPF0758 protein VFMJ11_0123 (224 aa).

Residues 102-224 (ALTSPEHTKR…IVSFAERGWI (123 aa)) form the MPN domain. The Zn(2+) site is built by H173, H175, and D186. The JAMM motif signature appears at 173–186 (HNHPSGVAEPSQAD).

This sequence belongs to the UPF0758 family.

The sequence is that of UPF0758 protein VFMJ11_0123 from Aliivibrio fischeri (strain MJ11) (Vibrio fischeri).